The sequence spans 217 residues: Fucoxanthin-chlorophyll a-c binding protein A, chloroplastic (217 aa).

Residues 1–39 constitute a chloroplast transit peptide; the sequence is MKSAVMAVACAAAPGLRRPSAFNGAALTTSAKSSSAMKM. 3 helical membrane-spanning segments follow: residues 81-101, 122-142, and 183-203; these read IAML…PGML, IPPA…LAVM, and GRAA…NNKP.

Belongs to the fucoxanthin chlorophyll protein family. As to quaternary structure, the LHC complex of chromophytic algae is composed of fucoxanthin, chlorophyll A and C bound non-covalently by fucoxanthin chlorophyll proteins (FCPs). The ratio of pigments in this LHC is; fucoxanthin: chlorophyll C: chlorophyll A; (0.6-1): (0.1-0.3): (1).

It localises to the plastid. The protein localises to the chloroplast thylakoid membrane. Its function is as follows. The light-harvesting complex (LHC) functions as a light receptor, it captures and delivers excitation energy to photosystems with which it is closely associated. Energy is transferred from the carotenoid and chlorophyll C (or B) to chlorophyll A and the photosynthetic reaction centers where it is used to synthesize ATP and reducing power. The protein is Fucoxanthin-chlorophyll a-c binding protein A, chloroplastic (FCPA) of Macrocystis pyrifera (Giant kelp).